Reading from the N-terminus, the 255-residue chain is MWIGIISLFPEMFRAITDYGVTGRAVKNGLLSIQSWSPRDFTYDRHRTVDDRPYGGGPGMLMMVQPLRDAIHAAKAAAGEGAKVIYLSPQGRKLDQAGVSELATNQKLILVCGRYEGIDERVIQTEIDEEWSIGDYVLSGGELPAMTLIDSVSRFIPGVLGHEASATEDSFAEGLLDCPHYTRPEVLEGMEVPPVLLSGNHAEIRRWRLKQSLGRTWLRRPELLENLALTEEQARLLAEFKTEHAQQQHKHDGMA.

S-adenosyl-L-methionine contacts are provided by residues Gly113 and 133–138 (IGDYVL).

The protein belongs to the RNA methyltransferase TrmD family. In terms of assembly, homodimer.

It localises to the cytoplasm. It catalyses the reaction guanosine(37) in tRNA + S-adenosyl-L-methionine = N(1)-methylguanosine(37) in tRNA + S-adenosyl-L-homocysteine + H(+). Functionally, specifically methylates guanosine-37 in various tRNAs. This chain is tRNA (guanine-N(1)-)-methyltransferase, found in Escherichia coli O127:H6 (strain E2348/69 / EPEC).